Reading from the N-terminus, the 219-residue chain is LHFPL tetraspan subfamily member 5 protein (219 aa).

Residues 1 to 24 (MVKLLPAQEAAKIYHTNYVRNSRA) lie on the Cytoplasmic side of the membrane. A helical membrane pass occupies residues 25–45 (VGVMWGTLTICFSVLVMALFI). The Extracellular segment spans residues 46–98 (QPYWIGDSVSTPQAGYFGLFSYCVGNVLSSELICKGGPLDFSSIPSRAFKTAM). A helical transmembrane segment spans residues 99–119 (FFVALAMFLIIGSIICFSLFF). Residues 120–128 (VCNTATVYK) are Cytoplasmic-facing. A helical membrane pass occupies residues 129–149 (ICAWMQLAAATGLMIGCLVYP). Residues 150–178 (DGWDSSEVRRMCGEQTGKYTLGHCTIRWA) are Extracellular-facing. A helical membrane pass occupies residues 179-199 (FMLAILSIGDALILSFLAFVL). At 200 to 219 (GYRQDKLLPDDYKADGNEEV) the chain is on the cytoplasmic side.

This sequence belongs to the LHFP family. As to quaternary structure, forms the MET channel composed of TMC (TMC1 or TMC2), TMIE, TOMT, CIB (CIB2 or CIB3), LHPL5 and PCDH15. Interaction with PCDH15 is required for efficient localization to hair bundles.

It is found in the cell membrane. Its function is as follows. Auxiliary subunit of the mechanotransducer (MET) non-specific cation channel complex located at the tips of the shorter stereocilia of cochlear hair cells and that mediates sensory transduction in the auditory system. The MET complex is composed of two dimeric pore-forming ion-conducting transmembrane TMC (TMC1 or TMC2) subunits, and aided by several auxiliary proteins including LHFPL5, TMIE, CIB2/3 and TOMT, and the tip-link PCDH15. Functionally couples PCDH15 to the transduction channel. This is LHFPL tetraspan subfamily member 5 protein from Rattus norvegicus (Rat).